The sequence spans 177 residues: Large ribosomal subunit protein uL6 (177 aa).

It belongs to the universal ribosomal protein uL6 family. In terms of assembly, part of the 50S ribosomal subunit.

Its function is as follows. This protein binds to the 23S rRNA, and is important in its secondary structure. It is located near the subunit interface in the base of the L7/L12 stalk, and near the tRNA binding site of the peptidyltransferase center. The sequence is that of Large ribosomal subunit protein uL6 from Dichelobacter nodosus (strain VCS1703A).